The sequence spans 371 residues: Transcription factor bHLH77 (371 aa).

Disordered regions lie at residues 1–25 (MNMDKETEQTLNYLPLGQSDPFGNG), 65–206 (SGGI…SLAE), and 352–371 (QSNNNNNNCSEPTLQMKLEP). Over residues 85-96 (SQPTTQESNKSS) the composition is skewed to polar residues. Positions 128-142 (SPASSSLTASNSKVS) are enriched in low complexity. The span at 165–190 (GVEKCDSKGDNKDDAKPPEAPKDYIH) shows a compositional bias: basic and acidic residues. The 51-residue stretch at 197–247 (QATDSHSLAERARREKISERMTLLQDLVPGCNRITGKAVMLDEIINYVQSL) folds into the bHLH domain.

As to quaternary structure, homodimer. Interacts with IBH1. As to expression, expressed constitutively in roots, leaves, stems, and flowers.

Its subcellular location is the nucleus. The chain is Transcription factor bHLH77 (BHLH77) from Arabidopsis thaliana (Mouse-ear cress).